A 336-amino-acid polypeptide reads, in one-letter code: WAT1-related protein At2g37450 (336 aa).

Transmembrane regions (helical) follow at residues 7-27, 45-65, 79-99, 115-135, 160-180, 189-209, 227-247, 255-275, and 279-299; these read ALPF…DILT, HGVA…PVIA, TFAI…ALIF, VVGT…KGPA, GAVL…LQAI, LSLA…VALV, LTIT…GGVV, FVTA…SIIF, and MYLG…LVIW. EamA domains are found at residues 63–126 and 169–298; these read VIAQ…GGIM and FSYA…YLVI.

Belongs to the drug/metabolite transporter (DMT) superfamily. Plant drug/metabolite exporter (P-DME) (TC 2.A.7.4) family.

It localises to the membrane. The polypeptide is WAT1-related protein At2g37450 (Arabidopsis thaliana (Mouse-ear cress)).